The following is a 379-amino-acid chain: UDP-N-acetylglucosamine--N-acetylmuramyl-(pentapeptide) pyrophosphoryl-undecaprenol N-acetylglucosamine transferase (379 aa).

Residues 17 to 19, Asn128, Arg169, Ser197, and Gln298 each bind UDP-N-acetyl-alpha-D-glucosamine; that span reads TGG.

Belongs to the glycosyltransferase 28 family. MurG subfamily.

It localises to the cell inner membrane. The catalysed reaction is di-trans,octa-cis-undecaprenyl diphospho-N-acetyl-alpha-D-muramoyl-L-alanyl-D-glutamyl-meso-2,6-diaminopimeloyl-D-alanyl-D-alanine + UDP-N-acetyl-alpha-D-glucosamine = di-trans,octa-cis-undecaprenyl diphospho-[N-acetyl-alpha-D-glucosaminyl-(1-&gt;4)]-N-acetyl-alpha-D-muramoyl-L-alanyl-D-glutamyl-meso-2,6-diaminopimeloyl-D-alanyl-D-alanine + UDP + H(+). The protein operates within cell wall biogenesis; peptidoglycan biosynthesis. In terms of biological role, cell wall formation. Catalyzes the transfer of a GlcNAc subunit on undecaprenyl-pyrophosphoryl-MurNAc-pentapeptide (lipid intermediate I) to form undecaprenyl-pyrophosphoryl-MurNAc-(pentapeptide)GlcNAc (lipid intermediate II). The sequence is that of UDP-N-acetylglucosamine--N-acetylmuramyl-(pentapeptide) pyrophosphoryl-undecaprenol N-acetylglucosamine transferase from Brucella canis (strain ATCC 23365 / NCTC 10854 / RM-666).